The primary structure comprises 105 residues: Urease subunit beta (105 aa).

It belongs to the urease beta subunit family. In terms of assembly, heterotrimer of UreA (gamma), UreB (beta) and UreC (alpha) subunits. Three heterotrimers associate to form the active enzyme.

The protein resides in the cytoplasm. The catalysed reaction is urea + 2 H2O + H(+) = hydrogencarbonate + 2 NH4(+). It participates in nitrogen metabolism; urea degradation; CO(2) and NH(3) from urea (urease route): step 1/1. This is Urease subunit beta from Marinobacter nauticus (strain ATCC 700491 / DSM 11845 / VT8) (Marinobacter aquaeolei).